The chain runs to 214 residues: ER lumen protein-retaining receptor (214 aa).

Residues 1-4 (MVFN) lie on the Lumenal side of the membrane. The chain crosses the membrane as a helical span at residues 5–23 (LFRISADLVHLLSIYFLLT). The Cytoplasmic portion of the chain corresponds to 24 to 37 (KIISHKNCIGISLR). A helical transmembrane segment spans residues 38 to 55 (SQILFFIVWVTRYLDIFY). Topologically, residues 56-63 (NFYSLYNT) are lumenal. The helical transmembrane segment at 64–82 (ILKIVYLTTSAYTIYLISK) threads the bilayer. Residues 83-98 (RFRATYDKIHDTLNVW) lie on the Cytoplasmic side of the membrane. The helical transmembrane segment at 99–112 (YLIVPCIVLAFIFT) threads the bilayer. The Lumenal portion of the chain corresponds to 113-119 (EDYSITE). The helical transmembrane segment at 120 to 139 (ICWTFSIFLEAVAILPQILL) threads the bilayer. Residues 140–151 (LRSTGEVENLNS) lie on the Cytoplasmic side of the membrane. The helical transmembrane segment at 152–170 (QYIFCLGLYRALYIINWIY) threads the bilayer. Residues 171–181 (RYATEQSYWSP) lie on the Lumenal side of the membrane. The chain crosses the membrane as a helical span at residues 182-202 (LTWICGSIQTLLYVEYFYYYI). Residues 203-214 (KSRVEGTKFVLP) are Cytoplasmic-facing.

Belongs to the ERD2 family.

It localises to the endoplasmic reticulum membrane. Functionally, required for the retention of luminal endoplasmic reticulum proteins. Determines the specificity of the luminal ER protein retention system. Also required for normal vesicular traffic through the Golgi. The sequence is that of ER lumen protein-retaining receptor from Entamoeba histolytica (strain ATCC 30459 / HM-1:IMSS / ABRM).